The primary structure comprises 694 residues: Elongation factor G (694 aa).

The 280-residue stretch at 8–287 folds into the tr-type G domain; sequence EDYRNFGIMA…AVVEFLPAPT (280 aa). GTP is bound by residues 17-24, 86-90, and 140-143; these read AHIDAGKT, DTPGH, and NKMD.

This sequence belongs to the TRAFAC class translation factor GTPase superfamily. Classic translation factor GTPase family. EF-G/EF-2 subfamily.

The protein localises to the cytoplasm. Functionally, catalyzes the GTP-dependent ribosomal translocation step during translation elongation. During this step, the ribosome changes from the pre-translocational (PRE) to the post-translocational (POST) state as the newly formed A-site-bound peptidyl-tRNA and P-site-bound deacylated tRNA move to the P and E sites, respectively. Catalyzes the coordinated movement of the two tRNA molecules, the mRNA and conformational changes in the ribosome. In Brucella canis (strain ATCC 23365 / NCTC 10854 / RM-666), this protein is Elongation factor G.